Reading from the N-terminus, the 507-residue chain is O-fucosyltransferase 30 (507 aa).

Residues 26 to 46 (AIFLCSVSILVVFFIVVFFIT) form a helical; Signal-anchor for type II membrane protein membrane-spanning segment. Asn110, Asn146, Asn398, and Asn410 each carry an N-linked (GlcNAc...) asparagine glycan.

It belongs to the glycosyltransferase GT106 family.

The protein resides in the membrane. The protein operates within glycan metabolism. In Arabidopsis thaliana (Mouse-ear cress), this protein is O-fucosyltransferase 30.